Here is a 131-residue protein sequence, read N- to C-terminus: UPF0102 protein YraN (131 aa).

The segment at 1–20 is disordered; that stretch reads MATVPTRSGSPRQLTTKQTG.

It belongs to the UPF0102 family.

The protein is UPF0102 protein YraN of Escherichia coli O139:H28 (strain E24377A / ETEC).